The primary structure comprises 254 residues: Pyridoxine 5'-phosphate synthase (254 aa).

Asn-12 is a binding site for 3-amino-2-oxopropyl phosphate. A 1-deoxy-D-xylulose 5-phosphate-binding site is contributed by 14–15 (DH). A 3-amino-2-oxopropyl phosphate-binding site is contributed by Arg-23. His-48 functions as the Proton acceptor in the catalytic mechanism. Residues Arg-50 and His-55 each coordinate 1-deoxy-D-xylulose 5-phosphate. Glu-75 (proton acceptor) is an active-site residue. Residue Thr-105 participates in 1-deoxy-D-xylulose 5-phosphate binding. His-199 acts as the Proton donor in catalysis. Residues Gly-200 and 221–222 (GF) each bind 3-amino-2-oxopropyl phosphate.

It belongs to the PNP synthase family. As to quaternary structure, homooctamer; tetramer of dimers.

It localises to the cytoplasm. It carries out the reaction 3-amino-2-oxopropyl phosphate + 1-deoxy-D-xylulose 5-phosphate = pyridoxine 5'-phosphate + phosphate + 2 H2O + H(+). It functions in the pathway cofactor biosynthesis; pyridoxine 5'-phosphate biosynthesis; pyridoxine 5'-phosphate from D-erythrose 4-phosphate: step 5/5. Functionally, catalyzes the complicated ring closure reaction between the two acyclic compounds 1-deoxy-D-xylulose-5-phosphate (DXP) and 3-amino-2-oxopropyl phosphate (1-amino-acetone-3-phosphate or AAP) to form pyridoxine 5'-phosphate (PNP) and inorganic phosphate. The protein is Pyridoxine 5'-phosphate synthase of Rhodopseudomonas palustris (strain HaA2).